Reading from the N-terminus, the 859-residue chain is Leucine--tRNA ligase (859 aa).

The 'HIGH' region motif lies at 42-52 (PYPSGRLHMGH). Residues 618 to 622 (KMSKS) carry the 'KMSKS' region motif. Lysine 621 lines the ATP pocket.

It belongs to the class-I aminoacyl-tRNA synthetase family.

It is found in the cytoplasm. It catalyses the reaction tRNA(Leu) + L-leucine + ATP = L-leucyl-tRNA(Leu) + AMP + diphosphate. In Shewanella baltica (strain OS223), this protein is Leucine--tRNA ligase.